The sequence spans 207 residues: Putative tributyltin chloride resistance protein (207 aa).

Positions 37 to 122 are slt-type domain; the sequence is NLPIELALMP…YHAIAALNLG (86 aa). Glu49 is an active-site residue.

Belongs to the transglycosylase Slt family.

This Alteromonas sp. (strain M-1) protein is Putative tributyltin chloride resistance protein (tbtA).